Here is a 351-residue protein sequence, read N- to C-terminus: Nitronate monooxygenase (351 aa).

Residues L21, N69, Q176, G181, G218, and 237 to 240 (QMGT) each bind FMN.

Belongs to the nitronate monooxygenase family. NMO class I subfamily. The cofactor is FMN.

The catalysed reaction is 3 propionate 3-nitronate + 3 O2 + H2O = 3 3-oxopropanoate + 2 nitrate + nitrite + H2O2 + 3 H(+). Functionally, nitronate monooxygenase that uses molecular oxygen to catalyze the oxidative denitrification of alkyl nitronates. The toxin propionate 3-nitronate (P3N) is the best substrate (and the presumed physiological substrate), but this enzyme is also active on other primary and secondary nitronates such as propyl-1-nitronate, ethylnitronate, pentyl-1-nitronate, butyl-1-nitronate and propyl-2-nitronate. Is likely involved in the degradation of P3N, that allows P.aeruginosa PAO1 to grow on 3-nitropropionate/P3N as the sole nitrogen source. Also functions in the detoxification of P3N, a metabolic poison produced by plants and fungi as a defense mechanism. Cannot oxidize nitroalkanes such as 3-nitropropionate, nitroethane, 1-nitropropane, 1-nitrobutane, 1-nitropentane, or 2-nitropropane. The chain is Nitronate monooxygenase from Pseudomonas aeruginosa (strain ATCC 15692 / DSM 22644 / CIP 104116 / JCM 14847 / LMG 12228 / 1C / PRS 101 / PAO1).